The following is a 173-amino-acid chain: MKVAIFPGSFDPLTLGHLDLIKRGSALFDHLAVAVMTNTSKDAWFTVDERVAQVKEAVAGLDNVSVITATGLTVDLMNKIGADYLMRGVRNVDDFRYEKDIAAMNHYLDDQVETIIFLADPKYQYLSSSLLKEVAMSGGNIAALLPANINEALQARLEKRQMKRVKKENEEAR.

S9 contributes to the substrate binding site. ATP is bound by residues 9–10 (SF) and H17. Substrate is bound by residues K41, T73, and R87. Residues 88 to 90 (GVR), E98, and 123 to 129 (YQYLSSS) each bind ATP.

It belongs to the bacterial CoaD family. Homohexamer. Mg(2+) is required as a cofactor.

It is found in the cytoplasm. The enzyme catalyses (R)-4'-phosphopantetheine + ATP + H(+) = 3'-dephospho-CoA + diphosphate. It participates in cofactor biosynthesis; coenzyme A biosynthesis; CoA from (R)-pantothenate: step 4/5. Reversibly transfers an adenylyl group from ATP to 4'-phosphopantetheine, yielding dephospho-CoA (dPCoA) and pyrophosphate. The chain is Phosphopantetheine adenylyltransferase from Limosilactobacillus fermentum (strain NBRC 3956 / LMG 18251) (Lactobacillus fermentum).